The chain runs to 288 residues: Oxaloacetate decarboxylase (288 aa).

Ser47 contacts substrate. Asp85 serves as a coordination point for Mg(2+). Residues Arg156 and His232 each contribute to the substrate site.

The protein belongs to the isocitrate lyase/PEP mutase superfamily. Oxaloacetate decarboxylase family. Homotetramer; dimer of dimers. The cofactor is Mg(2+).

It catalyses the reaction oxaloacetate + H(+) = pyruvate + CO2. In terms of biological role, catalyzes the decarboxylation of oxaloacetate into pyruvate. Seems to play a role in maintaining cellular concentrations of bicarbonate and pyruvate. The protein is Oxaloacetate decarboxylase of Rhodopseudomonas palustris (strain BisB18).